The sequence spans 290 residues: Formamidopyrimidine-DNA glycosylase (290 aa).

The Schiff-base intermediate with DNA role is filled by P2. Catalysis depends on E3, which acts as the Proton donor. Catalysis depends on K58, which acts as the Proton donor; for beta-elimination activity. Residues H98, R126, and R171 each contribute to the DNA site. The FPG-type zinc finger occupies 256 to 290 (FVYDRAGLPCRVCATPVRQIVQGQRSTFYCPKCQH). R280 acts as the Proton donor; for delta-elimination activity in catalysis.

The protein belongs to the FPG family. Monomer. Requires Zn(2+) as cofactor.

It catalyses the reaction Hydrolysis of DNA containing ring-opened 7-methylguanine residues, releasing 2,6-diamino-4-hydroxy-5-(N-methyl)formamidopyrimidine.. The enzyme catalyses 2'-deoxyribonucleotide-(2'-deoxyribose 5'-phosphate)-2'-deoxyribonucleotide-DNA = a 3'-end 2'-deoxyribonucleotide-(2,3-dehydro-2,3-deoxyribose 5'-phosphate)-DNA + a 5'-end 5'-phospho-2'-deoxyribonucleoside-DNA + H(+). In terms of biological role, involved in base excision repair of DNA damaged by oxidation or by mutagenic agents. Acts as a DNA glycosylase that recognizes and removes damaged bases. Has a preference for oxidized purines, such as 7,8-dihydro-8-oxoguanine (8-oxoG). Has AP (apurinic/apyrimidinic) lyase activity and introduces nicks in the DNA strand. Cleaves the DNA backbone by beta-delta elimination to generate a single-strand break at the site of the removed base with both 3'- and 5'-phosphates. The chain is Formamidopyrimidine-DNA glycosylase from Cupriavidus taiwanensis (strain DSM 17343 / BCRC 17206 / CCUG 44338 / CIP 107171 / LMG 19424 / R1) (Ralstonia taiwanensis (strain LMG 19424)).